The primary structure comprises 176 residues: 3-hydroxydecanoyl-[acyl-carrier-protein] dehydratase (176 aa).

H71 is a catalytic residue.

Belongs to the thioester dehydratase family. FabA subfamily. In terms of assembly, homodimer.

The protein resides in the cytoplasm. It carries out the reaction a (3R)-hydroxyacyl-[ACP] = a (2E)-enoyl-[ACP] + H2O. It catalyses the reaction (3R)-hydroxydecanoyl-[ACP] = (2E)-decenoyl-[ACP] + H2O. The catalysed reaction is (2E)-decenoyl-[ACP] = (3Z)-decenoyl-[ACP]. Its pathway is lipid metabolism; fatty acid biosynthesis. Its function is as follows. Necessary for the introduction of cis unsaturation into fatty acids. Catalyzes the dehydration of (3R)-3-hydroxydecanoyl-ACP to E-(2)-decenoyl-ACP and then its isomerization to Z-(3)-decenoyl-ACP. Can catalyze the dehydratase reaction for beta-hydroxyacyl-ACPs with saturated chain lengths up to 16:0, being most active on intermediate chain length. The protein is 3-hydroxydecanoyl-[acyl-carrier-protein] dehydratase of Rhodopseudomonas palustris (strain BisB18).